The following is a 534-amino-acid chain: Glycerol kinase 5 (534 aa).

S33 and T34 together coordinate ATP. The glycerol site is built by R103, D280, and Q281. Residues T302, G345, and G445 each coordinate ATP.

It belongs to the FGGY kinase family. Expressed predominantly in sebaceous glands.

Its subcellular location is the cytoplasm. The catalysed reaction is glycerol + ATP = sn-glycerol 3-phosphate + ADP + H(+). It functions in the pathway polyol metabolism; glycerol degradation via glycerol kinase pathway; sn-glycerol 3-phosphate from glycerol: step 1/1. Its function is as follows. Skin-specific kinase that plays a key role in glycerol metabolism, catalyzing its phosphorylation to produce sn-glycerol 3-phosphate. Involved in skin-specific regulation of sterol regulatory element-binding protein (SREBP) processing and lipid biosynthesis. The sequence is that of Glycerol kinase 5 (Gk5) from Mus musculus (Mouse).